Here is a 267-residue protein sequence, read N- to C-terminus: Placental prolactin-related protein 2 (267 aa).

2 N-linked (GlcNAc...) asparagine glycosylation sites follow: Asn-99 and Asn-121. 2 disulfides stabilise this stretch: Cys-126/Cys-244 and Cys-261/Cys-267.

It belongs to the somatotropin/prolactin family.

It localises to the secreted. Its function is as follows. Placental prolactin-related proteins may play a specific role during gestation. In Bos taurus (Bovine), this protein is Placental prolactin-related protein 2 (PRP2).